A 93-amino-acid chain; its full sequence is Alpha-defensin 23 (93 aa).

The signal sequence occupies residues 1–19 (MKTLVLLSALILLAFQVQA). The propeptide occupies 20–58 (DPIQNTDEETKTEEQPGKEDQAVSVSFGDPEGSSLQEES). Residues 24-54 (NTDEETKTEEQPGKEDQAVSVSFGDPEGSSL) form a disordered region. Over residues 27–40 (EETKTEEQPGKEDQ) the composition is skewed to basic and acidic residues. 3 cysteine pairs are disulfide-bonded: Cys64-Cys92, Cys66-Cys81, and Cys71-Cys91.

This sequence belongs to the alpha-defensin family.

The protein localises to the secreted. Functionally, may have microbicidal activities. This chain is Alpha-defensin 23 (Defa23), found in Mus musculus (Mouse).